The chain runs to 93 residues: RNA-binding protein Hfq (93 aa).

Residues 11-71 (DVFLNHVRKS…ISTVMPGAPI (61 aa)) form the Sm domain.

Belongs to the Hfq family. As to quaternary structure, homohexamer.

Its function is as follows. RNA chaperone that binds small regulatory RNA (sRNAs) and mRNAs to facilitate mRNA translational regulation in response to envelope stress, environmental stress and changes in metabolite concentrations. Also binds with high specificity to tRNAs. The chain is RNA-binding protein Hfq from Granulibacter bethesdensis (strain ATCC BAA-1260 / CGDNIH1).